The chain runs to 159 residues: 2-C-methyl-D-erythritol 2,4-cyclodiphosphate synthase (159 aa).

Residues Asp8 and His10 each coordinate a divalent metal cation. Residues 8 to 10 and 34 to 35 contribute to the 4-CDP-2-C-methyl-D-erythritol 2-phosphate site; these read DVH and HS. His42 is an a divalent metal cation binding site. 4-CDP-2-C-methyl-D-erythritol 2-phosphate contacts are provided by residues 56–58, 61–65, 100–106, 132–135, Phe139, and Arg142; these read DIG, FPDTD, AQAPKML, and TTTE.

It belongs to the IspF family. Homotrimer. The cofactor is a divalent metal cation.

It catalyses the reaction 4-CDP-2-C-methyl-D-erythritol 2-phosphate = 2-C-methyl-D-erythritol 2,4-cyclic diphosphate + CMP. The protein operates within isoprenoid biosynthesis; isopentenyl diphosphate biosynthesis via DXP pathway; isopentenyl diphosphate from 1-deoxy-D-xylulose 5-phosphate: step 4/6. Involved in the biosynthesis of isopentenyl diphosphate (IPP) and dimethylallyl diphosphate (DMAPP), two major building blocks of isoprenoid compounds. Catalyzes the conversion of 4-diphosphocytidyl-2-C-methyl-D-erythritol 2-phosphate (CDP-ME2P) to 2-C-methyl-D-erythritol 2,4-cyclodiphosphate (ME-CPP) with a corresponding release of cytidine 5-monophosphate (CMP). This Klebsiella pneumoniae (strain 342) protein is 2-C-methyl-D-erythritol 2,4-cyclodiphosphate synthase.